Consider the following 513-residue polypeptide: Maturase K (513 aa).

This sequence belongs to the intron maturase 2 family. MatK subfamily.

The protein localises to the plastid. It is found in the chloroplast. Its function is as follows. Usually encoded in the trnK tRNA gene intron. Probably assists in splicing its own and other chloroplast group II introns. This is Maturase K from Pinus resinosa (Red pine).